Reading from the N-terminus, the 619-residue chain is Chaperone protein HscA homolog (619 aa).

This sequence belongs to the heat shock protein 70 family.

Functionally, chaperone involved in the maturation of iron-sulfur cluster-containing proteins. Has a low intrinsic ATPase activity which is markedly stimulated by HscB. The protein is Chaperone protein HscA homolog of Haemophilus influenzae (strain 86-028NP).